The chain runs to 264 residues: Methionine aminopeptidase (264 aa).

Histidine 79 is a substrate binding site. 3 residues coordinate a divalent metal cation: aspartate 97, aspartate 108, and histidine 171. Histidine 178 lines the substrate pocket. Residues glutamate 204 and glutamate 235 each contribute to the a divalent metal cation site.

This sequence belongs to the peptidase M24A family. Methionine aminopeptidase type 1 subfamily. Monomer. Co(2+) is required as a cofactor. Requires Zn(2+) as cofactor. Mn(2+) serves as cofactor. It depends on Fe(2+) as a cofactor.

It catalyses the reaction Release of N-terminal amino acids, preferentially methionine, from peptides and arylamides.. Removes the N-terminal methionine from nascent proteins. The N-terminal methionine is often cleaved when the second residue in the primary sequence is small and uncharged (Met-Ala-, Cys, Gly, Pro, Ser, Thr, or Val). Requires deformylation of the N(alpha)-formylated initiator methionine before it can be hydrolyzed. The sequence is that of Methionine aminopeptidase from Salmonella typhi.